The chain runs to 355 residues: UDP-N-acetylglucosamine--N-acetylmuramyl-(pentapeptide) pyrophosphoryl-undecaprenol N-acetylglucosamine transferase (355 aa).

Residues 14–16 (TGG), Asn126, Arg162, Ser190, Ile243, 262–267 (ALTVSE), and Gln287 each bind UDP-N-acetyl-alpha-D-glucosamine.

The protein belongs to the glycosyltransferase 28 family. MurG subfamily.

The protein localises to the cell inner membrane. It catalyses the reaction di-trans,octa-cis-undecaprenyl diphospho-N-acetyl-alpha-D-muramoyl-L-alanyl-D-glutamyl-meso-2,6-diaminopimeloyl-D-alanyl-D-alanine + UDP-N-acetyl-alpha-D-glucosamine = di-trans,octa-cis-undecaprenyl diphospho-[N-acetyl-alpha-D-glucosaminyl-(1-&gt;4)]-N-acetyl-alpha-D-muramoyl-L-alanyl-D-glutamyl-meso-2,6-diaminopimeloyl-D-alanyl-D-alanine + UDP + H(+). It participates in cell wall biogenesis; peptidoglycan biosynthesis. In terms of biological role, cell wall formation. Catalyzes the transfer of a GlcNAc subunit on undecaprenyl-pyrophosphoryl-MurNAc-pentapeptide (lipid intermediate I) to form undecaprenyl-pyrophosphoryl-MurNAc-(pentapeptide)GlcNAc (lipid intermediate II). The chain is UDP-N-acetylglucosamine--N-acetylmuramyl-(pentapeptide) pyrophosphoryl-undecaprenol N-acetylglucosamine transferase from Vibrio campbellii (strain ATCC BAA-1116).